Reading from the N-terminus, the 247-residue chain is Carboxy-S-adenosyl-L-methionine synthase (247 aa).

Residues Tyr39, 64-66 (GCS), 89-90 (DN), 117-118 (DI), Asn132, and Arg199 contribute to the S-adenosyl-L-methionine site.

Belongs to the class I-like SAM-binding methyltransferase superfamily. Cx-SAM synthase family. In terms of assembly, homodimer.

It carries out the reaction prephenate + S-adenosyl-L-methionine = carboxy-S-adenosyl-L-methionine + 3-phenylpyruvate + H2O. Its function is as follows. Catalyzes the conversion of S-adenosyl-L-methionine (SAM) to carboxy-S-adenosyl-L-methionine (Cx-SAM). The polypeptide is Carboxy-S-adenosyl-L-methionine synthase (Klebsiella pneumoniae subsp. pneumoniae (strain ATCC 700721 / MGH 78578)).